A 141-amino-acid chain; its full sequence is Large ribosomal subunit protein uL16c (141 aa).

The segment covering 1–17 (MLSPRRTKYRKQHRGRL) has biased composition (basic residues). A disordered region spans residues 1–20 (MLSPRRTKYRKQHRGRLKGT).

This sequence belongs to the universal ribosomal protein uL16 family. Part of the 50S ribosomal subunit.

Its subcellular location is the plastid. It is found in the chloroplast. This chain is Large ribosomal subunit protein uL16c, found in Staurastrum punctulatum (Green alga).